The primary structure comprises 241 residues: Ribonuclease PH (241 aa).

Phosphate-binding positions include arginine 89 and 127–129 (GTR).

It belongs to the RNase PH family. In terms of assembly, homohexameric ring arranged as a trimer of dimers.

It catalyses the reaction tRNA(n+1) + phosphate = tRNA(n) + a ribonucleoside 5'-diphosphate. Functionally, phosphorolytic 3'-5' exoribonuclease that plays an important role in tRNA 3'-end maturation. Removes nucleotide residues following the 3'-CCA terminus of tRNAs; can also add nucleotides to the ends of RNA molecules by using nucleoside diphosphates as substrates, but this may not be physiologically important. Probably plays a role in initiation of 16S rRNA degradation (leading to ribosome degradation) during starvation. This Xanthomonas euvesicatoria pv. vesicatoria (strain 85-10) (Xanthomonas campestris pv. vesicatoria) protein is Ribonuclease PH.